A 296-amino-acid polypeptide reads, in one-letter code: Acetylglutamate kinase (296 aa).

Residues 71 to 72 (GG), Arg93, and Asn186 contribute to the substrate site.

Belongs to the acetylglutamate kinase family. ArgB subfamily.

The protein resides in the cytoplasm. It catalyses the reaction N-acetyl-L-glutamate + ATP = N-acetyl-L-glutamyl 5-phosphate + ADP. It participates in amino-acid biosynthesis; L-arginine biosynthesis; N(2)-acetyl-L-ornithine from L-glutamate: step 2/4. Catalyzes the ATP-dependent phosphorylation of N-acetyl-L-glutamate. The sequence is that of Acetylglutamate kinase from Synechococcus sp. (strain RCC307).